Here is a 355-residue protein sequence, read N- to C-terminus: Protein-glutamate methylesterase/protein-glutamine glutaminase (355 aa).

One can recognise a Response regulatory domain in the interval 4 to 121 (KVLIIDDSAL…ANGMHEYSEM (118 aa)). Residue Asp-55 is modified to 4-aspartylphosphate. The CheB-type methylesterase domain occupies 156-348 (LISSEKLIII…GRVLQYLAAN (193 aa)). Active-site residues include Ser-168, His-194, and Asp-290.

This sequence belongs to the CheB family. In terms of processing, phosphorylated by CheA. Phosphorylation of the N-terminal regulatory domain activates the methylesterase activity.

Its subcellular location is the cytoplasm. It carries out the reaction [protein]-L-glutamate 5-O-methyl ester + H2O = L-glutamyl-[protein] + methanol + H(+). The catalysed reaction is L-glutaminyl-[protein] + H2O = L-glutamyl-[protein] + NH4(+). Its function is as follows. Involved in chemotaxis. Part of a chemotaxis signal transduction system that modulates chemotaxis in response to various stimuli. Catalyzes the demethylation of specific methylglutamate residues introduced into the chemoreceptors (methyl-accepting chemotaxis proteins or MCP) by CheR. Also mediates the irreversible deamidation of specific glutamine residues to glutamic acid. The sequence is that of Protein-glutamate methylesterase/protein-glutamine glutaminase from Methylobacillus flagellatus (strain ATCC 51484 / DSM 6875 / VKM B-1610 / KT).